The primary structure comprises 137 residues: MAQAKKGGAPKKGQKTRRREKKNVPHGAAHIKSTFNNTIVSITDPQGNVIAWASSGHVGFKGSRKSTPFAAQLAAENAARKAQEHGVKKVDVFVKGPGSGRETAIRSLQAAGLEVGAISDVTPQPHNGCRPPKRRRV.

The segment at 1–30 (MAQAKKGGAPKKGQKTRRREKKNVPHGAAH) is disordered. The segment covering 8–21 (GAPKKGQKTRRREK) has biased composition (basic residues).

It belongs to the universal ribosomal protein uS11 family. As to quaternary structure, part of the 30S ribosomal subunit. Interacts with proteins S7 and S18. Binds to IF-3.

Located on the platform of the 30S subunit, it bridges several disparate RNA helices of the 16S rRNA. Forms part of the Shine-Dalgarno cleft in the 70S ribosome. This chain is Small ribosomal subunit protein uS11, found in Mycolicibacterium vanbaalenii (strain DSM 7251 / JCM 13017 / BCRC 16820 / KCTC 9966 / NRRL B-24157 / PYR-1) (Mycobacterium vanbaalenii).